The primary structure comprises 461 residues: Ornithine decarboxylase (461 aa).

Residue Lys69 is modified to N6-(pyridoxal phosphate)lysine. Residues Ser200, Gly237, and 274–277 (EPGR) each bind pyridoxal 5'-phosphate. Ser303 carries the post-translational modification Phosphoserine; by CK2. 331-332 (YD) provides a ligand contact to substrate. The active-site Proton donor; shared with dimeric partner is the Cys360. Cys360 is modified (S-nitrosocysteine; in inhibited form). Asp361 is a binding site for substrate. Position 389 (Tyr389) interacts with pyridoxal 5'-phosphate.

Belongs to the Orn/Lys/Arg decarboxylase class-II family. In terms of assembly, homodimer. Only the dimer is catalytically active, as the active sites are constructed of residues from both monomers. Does not form a heterodimer with AZIN2. It depends on pyridoxal 5'-phosphate as a cofactor. S-Nitrosylation inhibits the enzyme. S-Nitrosylated in vitro on 4 cysteine residues.

It catalyses the reaction L-ornithine + H(+) = putrescine + CO2. The protein operates within amine and polyamine biosynthesis; putrescine biosynthesis via L-ornithine pathway; putrescine from L-ornithine: step 1/1. With respect to regulation, inhibited by S-nitrosylation. Inhibited by antizymes (AZs) OAZ1, OAZ2 and OAZ3 in response to polyamine levels. AZs inhibit the assembly of the functional homodimer by binding to ODC monomers. Additionally, OAZ1 targets ODC monomers for ubiquitin-independent proteolytic destruction by the 26S proteasome. Inhibited by 1-amino-oxy-3-aminopropane (APA, an isosteric analog of putrescine). Irreversibly inhibited by alpha-difluoromethylornithine (DFMO). Its function is as follows. Catalyzes the first and rate-limiting step of polyamine biosynthesis that converts ornithine into putrescine, which is the precursor for the polyamines, spermidine and spermine. Polyamines are essential for cell proliferation and are implicated in cellular processes, ranging from DNA replication to apoptosis. The chain is Ornithine decarboxylase (ODC1) from Homo sapiens (Human).